We begin with the raw amino-acid sequence, 241 residues long: 2-C-methyl-D-erythritol 4-phosphate cytidylyltransferase (241 aa).

It belongs to the IspD/TarI cytidylyltransferase family. IspD subfamily.

The catalysed reaction is 2-C-methyl-D-erythritol 4-phosphate + CTP + H(+) = 4-CDP-2-C-methyl-D-erythritol + diphosphate. It functions in the pathway isoprenoid biosynthesis; isopentenyl diphosphate biosynthesis via DXP pathway; isopentenyl diphosphate from 1-deoxy-D-xylulose 5-phosphate: step 2/6. Its function is as follows. Catalyzes the formation of 4-diphosphocytidyl-2-C-methyl-D-erythritol from CTP and 2-C-methyl-D-erythritol 4-phosphate (MEP). In Hahella chejuensis (strain KCTC 2396), this protein is 2-C-methyl-D-erythritol 4-phosphate cytidylyltransferase.